Here is a 283-residue protein sequence, read N- to C-terminus: Probable endonuclease 4 (283 aa).

His-69, His-109, Glu-145, Asp-179, His-182, His-216, Asp-229, His-231, and Glu-261 together coordinate Zn(2+).

The protein belongs to the AP endonuclease 2 family. Requires Zn(2+) as cofactor.

The catalysed reaction is Endonucleolytic cleavage to 5'-phosphooligonucleotide end-products.. Functionally, endonuclease IV plays a role in DNA repair. It cleaves phosphodiester bonds at apurinic or apyrimidinic (AP) sites, generating a 3'-hydroxyl group and a 5'-terminal sugar phosphate. The chain is Probable endonuclease 4 from Desulfosudis oleivorans (strain DSM 6200 / JCM 39069 / Hxd3) (Desulfococcus oleovorans).